Here is a 239-residue protein sequence, read N- to C-terminus: Gag polyprotein (239 aa).

Residues 124–141 (KGEEVGETTAQRDAKMAP) show a composition bias toward basic and acidic residues. Residues 124 to 144 (KGEEVGETTAQRDAKMAPEKM) are disordered. The PPXY motif motif lies at 172–175 (PPPY). The disordered stretch occupies residues 184 to 214 (LAGVGEQQGQGGDTPWGAEQPRAEPGHAGLA).

The protein resides in the virion. This chain is Gag polyprotein (ev-1), found in Galliformes.